We begin with the raw amino-acid sequence, 367 residues long: Small ribosomal subunit protein uS2 (367 aa).

Positions 1–68 (MPKKAEAKTG…NSTPSTGSKF (68 aa)) are disordered. The span at 21–40 (AKKDVKAEVNETNKTAEKVS) shows a compositional bias: basic and acidic residues. The span at 53–66 (TNESSSNSTPSTGS) shows a compositional bias: low complexity.

This sequence belongs to the universal ribosomal protein uS2 family.

The chain is Small ribosomal subunit protein uS2 from Malacoplasma penetrans (strain HF-2) (Mycoplasma penetrans).